We begin with the raw amino-acid sequence, 201 residues long: ADP-ribosylation factor-related protein 1 (201 aa).

The residue at position 1 (M1) is an N-acetylmethionine. Residues 24-31 (GLDNAGKT), 75-79 (DLGGQ), and 134-137 (NKQD) each bind GTP.

The protein belongs to the small GTPase superfamily. Arf family. In terms of assembly, interacts with SYS1.

Its subcellular location is the golgi apparatus. The protein resides in the trans-Golgi network. Functionally, trans-Golgi-associated GTPase that regulates protein sorting. Controls the targeting of ARL1 and its effector to the trans-Golgi. Required for the lipidation of chylomicrons in the intestine and required for VLDL lipidation in the liver. The protein is ADP-ribosylation factor-related protein 1 (Arfrp1) of Mus musculus (Mouse).